The sequence spans 767 residues: GPI ethanolamine phosphate transferase 2 (767 aa).

Asn-186 and Asn-401 each carry an N-linked (GlcNAc...) asparagine glycan. The next 2 helical transmembrane spans lie at 407 to 427 (LGLF…YGLG) and 434 to 454 (VTFL…SSYV). Asn-490 carries an N-linked (GlcNAc...) asparagine glycan. 3 helical membrane passes run 513-533 (ILWA…CLNS), 538-558 (IWRS…LVFV), and 595-615 (IPIF…KMSA). Asn-627 carries an N-linked (GlcNAc...) asparagine glycan. Helical transmembrane passes span 655 to 675 (SVVL…IWWA), 695 to 715 (TLLT…CTML), and 733 to 755 (LAWT…SQVL).

It belongs to the PIGG/PIGN/PIGO family. PIGG subfamily.

The protein resides in the endoplasmic reticulum membrane. It participates in glycolipid biosynthesis; glycosylphosphatidylinositol-anchor biosynthesis. Functionally, ethanolamine phosphate transferase involved in glycosylphosphatidylinositol-anchor biosynthesis. Transfers ethanolamine phosphate to the GPI second mannose. The sequence is that of GPI ethanolamine phosphate transferase 2 (las21) from Aspergillus fumigatus (strain ATCC MYA-4609 / CBS 101355 / FGSC A1100 / Af293) (Neosartorya fumigata).